A 602-amino-acid chain; its full sequence is Probable pectinesterase/pectinesterase inhibitor 64 (602 aa).

A helical transmembrane segment spans residues 36–56 (ILIIIAASCILLLLISLLIYA). Residues 62–91 (SRNHHNPSHQTPTSDDHPPPETPPSPPPIA) are disordered. Residues 81 to 90 (PETPPSPPPI) show a composition bias toward pro residues. Positions 87 to 237 (PPPIAQIRLA…VNLTGNALSM (151 aa)) are pectinesterase inhibitor 64. Residues Asn-98, Asn-156, Asn-212, Asn-229, and Asn-315 are each glycosylated (N-linked (GlcNAc...) asparagine). A pectinesterase 64 region spans residues 288–595 (DVTVCKNGGK…YSVANFIQAD (308 aa)). Residues Thr-367 and Gln-397 each coordinate substrate. Catalysis depends on Asp-420, which acts as the Proton donor; for pectinesterase activity. The cysteines at positions 434 and 454 are disulfide-linked. The Nucleophile; for pectinesterase activity role is filled by Asp-441. Asn-492 and Asn-496 each carry an N-linked (GlcNAc...) asparagine glycan. 2 residues coordinate substrate: Arg-518 and Trp-520.

The protein in the N-terminal section; belongs to the PMEI family. In the C-terminal section; belongs to the pectinesterase family. In terms of tissue distribution, expressed in siliques.

It is found in the membrane. It catalyses the reaction [(1-&gt;4)-alpha-D-galacturonosyl methyl ester](n) + n H2O = [(1-&gt;4)-alpha-D-galacturonosyl](n) + n methanol + n H(+). The protein operates within glycan metabolism; pectin degradation; 2-dehydro-3-deoxy-D-gluconate from pectin: step 1/5. Its function is as follows. Acts in the modification of cell walls via demethylesterification of cell wall pectin. This is Probable pectinesterase/pectinesterase inhibitor 64 (PME64) from Arabidopsis thaliana (Mouse-ear cress).